A 372-amino-acid polypeptide reads, in one-letter code: Actin-related protein 2/3 complex subunit 1B (372 aa).

6 WD repeats span residues F6 to V45, E50 to T89, R94 to K135, P140 to R179, S242 to S280, and L324 to K367.

The protein belongs to the WD repeat ARPC1 family. In terms of assembly, component of the Arp2/3 complex composed of ACTR2/ARP2, ACTR3/ARP3, ARPC1B/p41-ARC, ARPC2/p34-ARC, ARPC3/p21-ARC, ARPC4/p20-ARC and ARPC5/p16-ARC.

It localises to the cytoplasm. Its subcellular location is the cytoskeleton. The protein localises to the nucleus. Component of the Arp2/3 complex, a multiprotein complex that mediates actin polymerization upon stimulation by nucleation-promoting factor (NPF). The Arp2/3 complex mediates the formation of branched actin networks in the cytoplasm, providing the force for cell motility. In addition to its role in the cytoplasmic cytoskeleton, the Arp2/3 complex also promotes actin polymerization in the nucleus, thereby regulating gene transcription and repair of damaged DNA. The Arp2/3 complex promotes homologous recombination (HR) repair in response to DNA damage by promoting nuclear actin polymerization, leading to drive motility of double-strand breaks (DSBs). The chain is Actin-related protein 2/3 complex subunit 1B from Homo sapiens (Human).